We begin with the raw amino-acid sequence, 349 residues long: UDP-N-acetylenolpyruvoylglucosamine reductase (349 aa).

The 189-residue stretch at 25 to 213 (VGPVARRLVT…VEQGERTDPQ (189 aa)) folds into the FAD-binding PCMH-type domain. Arginine 165 is an active-site residue. The active-site Proton donor is serine 242. Glutamate 341 is an active-site residue.

It belongs to the MurB family. The cofactor is FAD.

It is found in the cytoplasm. The catalysed reaction is UDP-N-acetyl-alpha-D-muramate + NADP(+) = UDP-N-acetyl-3-O-(1-carboxyvinyl)-alpha-D-glucosamine + NADPH + H(+). It participates in cell wall biogenesis; peptidoglycan biosynthesis. Cell wall formation. The chain is UDP-N-acetylenolpyruvoylglucosamine reductase from Mycolicibacterium gilvum (strain PYR-GCK) (Mycobacterium gilvum (strain PYR-GCK)).